A 403-amino-acid polypeptide reads, in one-letter code: Tyrosine--tRNA ligase (403 aa).

The 'HIGH' region motif lies at 42-51 (PTAPDLHLGH). The short motif at 226–230 (KMSKS) is the 'KMSKS' region element. Lysine 229 contributes to the ATP binding site. The S4 RNA-binding domain occupies 336–396 (MPISAVLNKA…GKKAFGRVTL (61 aa)).

It belongs to the class-I aminoacyl-tRNA synthetase family. TyrS type 2 subfamily. Homodimer.

The protein localises to the cytoplasm. The enzyme catalyses tRNA(Tyr) + L-tyrosine + ATP = L-tyrosyl-tRNA(Tyr) + AMP + diphosphate + H(+). Catalyzes the attachment of tyrosine to tRNA(Tyr) in a two-step reaction: tyrosine is first activated by ATP to form Tyr-AMP and then transferred to the acceptor end of tRNA(Tyr). The protein is Tyrosine--tRNA ligase of Pseudomonas syringae pv. syringae (strain B728a).